We begin with the raw amino-acid sequence, 452 residues long: Pup--protein ligase (452 aa).

Glutamate 9 is a binding site for Mg(2+). Arginine 53 is an ATP binding site. Tyrosine 55 is a binding site for Mg(2+). Catalysis depends on aspartate 57, which acts as the Proton acceptor. Position 63 (glutamate 63) interacts with Mg(2+). Residues threonine 66 and tryptophan 419 each contribute to the ATP site.

Belongs to the Pup ligase/Pup deamidase family. Pup-conjugating enzyme subfamily.

The catalysed reaction is ATP + [prokaryotic ubiquitin-like protein]-L-glutamate + [protein]-L-lysine = ADP + phosphate + N(6)-([prokaryotic ubiquitin-like protein]-gamma-L-glutamyl)-[protein]-L-lysine.. Its pathway is protein degradation; proteasomal Pup-dependent pathway. The protein operates within protein modification; protein pupylation. Its function is as follows. Catalyzes the covalent attachment of the prokaryotic ubiquitin-like protein modifier Pup to the proteasomal substrate proteins, thereby targeting them for proteasomal degradation. This tagging system is termed pupylation. The ligation reaction involves the side-chain carboxylate of the C-terminal glutamate of Pup and the side-chain amino group of a substrate lysine. The sequence is that of Pup--protein ligase from Mycobacteroides abscessus (strain ATCC 19977 / DSM 44196 / CCUG 20993 / CIP 104536 / JCM 13569 / NCTC 13031 / TMC 1543 / L948) (Mycobacterium abscessus).